A 314-amino-acid polypeptide reads, in one-letter code: UDP-N-acetylenolpyruvoylglucosamine reductase (314 aa).

The FAD-binding PCMH-type domain occupies 27-192 (KIGGKARYIV…LRAVFCLKFA (166 aa)). Residue R171 is part of the active site. S223 (proton donor) is an active-site residue. Residue E293 is part of the active site.

Belongs to the MurB family. Requires FAD as cofactor.

It is found in the cytoplasm. It catalyses the reaction UDP-N-acetyl-alpha-D-muramate + NADP(+) = UDP-N-acetyl-3-O-(1-carboxyvinyl)-alpha-D-glucosamine + NADPH + H(+). It participates in cell wall biogenesis; peptidoglycan biosynthesis. In terms of biological role, cell wall formation. This is UDP-N-acetylenolpyruvoylglucosamine reductase from Caldicellulosiruptor bescii (strain ATCC BAA-1888 / DSM 6725 / KCTC 15123 / Z-1320) (Anaerocellum thermophilum).